A 635-amino-acid chain; its full sequence is MNINTLIINFNKVKRMKNFLILTLLVVMVVVFLQGPTLMINNSGQGMGHNVEKIKLEPHVKIQRENLERKKIPPKQDFTDGLHASFTTIPFYYKANGIINQNTNKLYRNYQITIVTQTTVDRLSKVSMMAEKWKAPLSVAVFIKDSENPKAEIEKLEKHIENDYPALSYYSDIHILISNKTRYPVNNLRNLAIEHSRTDLVFIMDADFLPPLGLHDYILSQKYYFNIKPSNQHYFKNNLLNFYHKKPLNNNDNNNDYNNNPSKIPYDQIIDYSTNINTDSEFNNINYNMENLNENEYLKNINNNNNNNDNNYNNNNNNNNNNNNNNNNNNNNNNNNNNNNNNNNNNNNNNNNNNNNIDNNIDNKIDNIDNNIDNNNNIDNINNNNNINNIDNNNSNYNDNNNNNNNNNNNNNNNNNNNNNNNNNNNNNNNNNNNNNNNNNNNNNNNNNNNNNNNNNEPLKVAFVIPSFSSHIPPSQHPNNKMDMIDLVKSSKIEPSNSRVCKKCHSPTNFEKWMDAVEPYEVEYKWIFEPYLVFNKTQNIPFDERLKGYGFDKNSHAFSMAVEGFHFVVLPDSFIIHVNHSPSTWEGPSLDEQQWDALRVVCEIIPDVKIKNGYNPNVVLFNEPLPNECFSDHHW.

The Cytoplasmic segment spans residues 1–18; sequence MNINTLIINFNKVKRMKN. The chain crosses the membrane as a helical; Signal-anchor for type II membrane protein span at residues 19 to 38; the sequence is FLILTLLVVMVVVFLQGPTL. Over 39-635 the chain is Extracellular; that stretch reads MINNSGQGMG…PNECFSDHHW (597 aa). N-linked (GlcNAc...) asparagine glycosylation is found at Asn41 and Asn179. 2 disordered regions span residues 300-358 and 389-458; these read NINN…NNID and NIDN…NNEP. Residues 389–456 are compositionally biased toward low complexity; sequence NIDNNNSNYN…NNNNNNNNNN (68 aa). N-linked (GlcNAc...) asparagine glycans are attached at residues Asn393 and Asn535.

It belongs to the glycosyltransferase 8 family. Highly divergent.

Its subcellular location is the membrane. The polypeptide is Glycosyltransferase-like protein gnt13 (gnt13) (Dictyostelium discoideum (Social amoeba)).